The primary structure comprises 652 residues: tRNA 5-methylaminomethyl-2-thiouridine biosynthesis bifunctional protein MnmC (652 aa).

The tract at residues 1–235 (MPDRLVPATL…EPALRVGEYA (235 aa)) is tRNA (mnm(5)s(2)U34)-methyltransferase. The segment at 259-652 (IGAGLAGCAV…IRALRGRQIG (394 aa)) is FAD-dependent cmnm(5)s(2)U34 oxidoreductase.

In the N-terminal section; belongs to the methyltransferase superfamily. tRNA (mnm(5)s(2)U34)-methyltransferase family. This sequence in the C-terminal section; belongs to the DAO family. FAD is required as a cofactor.

The protein localises to the cytoplasm. The catalysed reaction is 5-aminomethyl-2-thiouridine(34) in tRNA + S-adenosyl-L-methionine = 5-methylaminomethyl-2-thiouridine(34) in tRNA + S-adenosyl-L-homocysteine + H(+). Functionally, catalyzes the last two steps in the biosynthesis of 5-methylaminomethyl-2-thiouridine (mnm(5)s(2)U) at the wobble position (U34) in tRNA. Catalyzes the FAD-dependent demodification of cmnm(5)s(2)U34 to nm(5)s(2)U34, followed by the transfer of a methyl group from S-adenosyl-L-methionine to nm(5)s(2)U34, to form mnm(5)s(2)U34. This is tRNA 5-methylaminomethyl-2-thiouridine biosynthesis bifunctional protein MnmC from Burkholderia ambifaria (strain ATCC BAA-244 / DSM 16087 / CCUG 44356 / LMG 19182 / AMMD) (Burkholderia cepacia (strain AMMD)).